A 377-amino-acid polypeptide reads, in one-letter code: Putrescine transport ATP-binding protein PotG (377 aa).

The ABC transporter domain occupies 20-250; it reads LEIRNLTKSY…PTTRYSAEFI (231 aa). 52-59 lines the ATP pocket; sequence GASGCGKS.

It belongs to the ABC transporter superfamily. In terms of assembly, the complex is composed of two ATP-binding proteins (PotG), two transmembrane proteins (PotH and PotI) and a solute-binding protein (PotF).

It localises to the cell inner membrane. The catalysed reaction is putrescine(out) + ATP + H2O = putrescine(in) + ADP + phosphate + H(+). With respect to regulation, transport is feedback inhibited by intracellular polyamines. In terms of biological role, part of the ABC transporter complex PotFGHI involved in putrescine uptake. Responsible for energy coupling to the transport system. Imports putrescine for maintenance of the optimal concentration of polyamines necessary for cell growth in the presence of glucose. This is Putrescine transport ATP-binding protein PotG from Escherichia coli (strain K12).